We begin with the raw amino-acid sequence, 155 residues long: 6,7-dimethyl-8-ribityllumazine synthase (155 aa).

5-amino-6-(D-ribitylamino)uracil contacts are provided by residues Phe-23, 57–59 (AFE), and 83–85 (AVI). 88-89 (AT) serves as a coordination point for (2S)-2-hydroxy-3-oxobutyl phosphate. His-91 (proton donor) is an active-site residue. A 5-amino-6-(D-ribitylamino)uracil-binding site is contributed by Phe-114. Arg-128 provides a ligand contact to (2S)-2-hydroxy-3-oxobutyl phosphate.

Belongs to the DMRL synthase family.

It carries out the reaction (2S)-2-hydroxy-3-oxobutyl phosphate + 5-amino-6-(D-ribitylamino)uracil = 6,7-dimethyl-8-(1-D-ribityl)lumazine + phosphate + 2 H2O + H(+). It functions in the pathway cofactor biosynthesis; riboflavin biosynthesis; riboflavin from 2-hydroxy-3-oxobutyl phosphate and 5-amino-6-(D-ribitylamino)uracil: step 1/2. Its function is as follows. Catalyzes the formation of 6,7-dimethyl-8-ribityllumazine by condensation of 5-amino-6-(D-ribitylamino)uracil with 3,4-dihydroxy-2-butanone 4-phosphate. This is the penultimate step in the biosynthesis of riboflavin. The polypeptide is 6,7-dimethyl-8-ribityllumazine synthase (Leptospira biflexa serovar Patoc (strain Patoc 1 / Ames)).